A 142-amino-acid polypeptide reads, in one-letter code: MLNEFKEFIARGNVMDLAVGVIIGAAFSKIVDSVVNDLVMPVVGAITGGGFDFSNYFLPLSASVTAPTLSAAREQGAVFAYGNFITVLINFLILAWIIFLLIKLVNRARASVERDKAPDPAAPPPQDILLLSEIRDLLRQRA.

3 consecutive transmembrane segments (helical) span residues 14-34 (VMDL…VDSV), 38-58 (LVMP…NYFL), and 82-102 (GNFI…FLLI).

This sequence belongs to the MscL family. In terms of assembly, homopentamer.

It localises to the cell inner membrane. Functionally, channel that opens in response to stretch forces in the membrane lipid bilayer. May participate in the regulation of osmotic pressure changes within the cell. The polypeptide is Large-conductance mechanosensitive channel (Rhizobium meliloti (strain 1021) (Ensifer meliloti)).